Reading from the N-terminus, the 223-residue chain is Ribose-5-phosphate isomerase A (223 aa).

Substrate contacts are provided by residues 32 to 35 (TGST), 85 to 88 (DGAD), and 98 to 101 (KGGG). E107 acts as the Proton acceptor in catalysis. Residue K125 coordinates substrate.

Belongs to the ribose 5-phosphate isomerase family. As to quaternary structure, homodimer.

It carries out the reaction aldehydo-D-ribose 5-phosphate = D-ribulose 5-phosphate. The protein operates within carbohydrate degradation; pentose phosphate pathway; D-ribose 5-phosphate from D-ribulose 5-phosphate (non-oxidative stage): step 1/1. In terms of biological role, catalyzes the reversible conversion of ribose-5-phosphate to ribulose 5-phosphate. The chain is Ribose-5-phosphate isomerase A from Pseudomonas fluorescens (strain ATCC BAA-477 / NRRL B-23932 / Pf-5).